The primary structure comprises 259 residues: Deoxyribose-phosphate aldolase (259 aa).

The active-site Proton donor/acceptor is the Asp-104. The active-site Schiff-base intermediate with acetaldehyde is Lys-168. Lys-200 acts as the Proton donor/acceptor in catalysis.

It belongs to the DeoC/FbaB aldolase family. DeoC type 2 subfamily.

The protein localises to the cytoplasm. The enzyme catalyses 2-deoxy-D-ribose 5-phosphate = D-glyceraldehyde 3-phosphate + acetaldehyde. It participates in carbohydrate degradation; 2-deoxy-D-ribose 1-phosphate degradation; D-glyceraldehyde 3-phosphate and acetaldehyde from 2-deoxy-alpha-D-ribose 1-phosphate: step 2/2. In terms of biological role, catalyzes a reversible aldol reaction between acetaldehyde and D-glyceraldehyde 3-phosphate to generate 2-deoxy-D-ribose 5-phosphate. This Agrobacterium fabrum (strain C58 / ATCC 33970) (Agrobacterium tumefaciens (strain C58)) protein is Deoxyribose-phosphate aldolase.